We begin with the raw amino-acid sequence, 147 residues long: UPF0047 protein sll1880 (147 aa).

The protein belongs to the UPF0047 family.

This is UPF0047 protein sll1880 from Synechocystis sp. (strain ATCC 27184 / PCC 6803 / Kazusa).